The following is a 262-amino-acid chain: MNGPAGLAYLDRRERILKLGESFEKQPRCAFHTVRYDFKPASVDASCEGNLEVGKGEQVTITLPNIEGSTPPVTVFKGSKRPYLKECILIINHDTGECRLEKLSSNITVKKTRGEGSSKIQCRLEQQQQQMWNPPRTSNLVQHSPSEDKLSPTSLMDDIERELKAEASLMDQMSSCDSSSDSRSSSSSSSEDSSSDSEDDDRSSPSGPRRYSSEHPSVSAGPQYRTSDADTTCNRLYDNSALLMSTLRSDLQLSESDSDSED.

A necessary for interaction with ELL region spans residues 17–104 (LKLGESFEKQ…TGECRLEKLS (88 aa)). Residues 124–144 (LEQQQQQMWNPPRTSNLVQHS) are compositionally biased toward polar residues. Disordered regions lie at residues 124–154 (LEQQQQQMWNPPRTSNLVQHSPSEDKLSPTS) and 170–232 (MDQM…ADTT). Ser146, Ser151, and Ser154 each carry phosphoserine. The segment covering 174–192 (SSCDSSSDSRSSSSSSSED) has biased composition (low complexity). Residues 177–262 (DSSSDSRSSS…LSESDSDSED (86 aa)) are necessary for transactivation activity. The tract at residues 248–262 (RSDLQLSESDSDSED) is necessary for interaction with TCEA1 and transactivation activity.

The protein belongs to the EAF family. As to quaternary structure, component of the super elongation complex (SEC), at least composed of EAF1, EAF2, CDK9, MLLT3/AF9, AFF (AFF1 or AFF4), the P-TEFb complex and ELL (ELL, ELL2 or ELL3). Interacts with ELL, ELL2 and TCEA1.

The protein resides in the nucleus speckle. Acts as a transcriptional transactivator of ELL, ELL2 and TCEA1 elongation activities. Potent inducer of apoptosis in prostatic and non-prostatic cell lines. In Rattus norvegicus (Rat), this protein is ELL-associated factor 2 (Eaf2).